The primary structure comprises 258 residues: MIFVLDVGNTNTVLGVYDGDELKHHWRIETSRSKTEDEYGMMIKALLNHVGLQFSDIRGIIISSVVPPIMFALERMCLKYFHIKPLIVGPGIKTGLDIKYDNPREVGADRIVNAVAGIHLYGSPLIIVDFGTATTYCYINEHKQYMGGAIAPGIMISTEALFARAAKLPRIEIARPDDIIGKNTVSAMQAGILYGYVGQVEGIVSRMKAKSKIPPKVIATGGLAPLIASESDIIDVVDPFLTLTGLKLLYEKNTEKKG.

6-13 (DVGNTNTV) is an ATP binding site. Residues Y100 and 107–110 (GADR) each bind substrate. The active-site Proton acceptor is D109. D129 is a K(+) binding site. T132 contacts ATP. T184 is a binding site for substrate.

This sequence belongs to the type III pantothenate kinase family. In terms of assembly, homodimer. Requires NH4(+) as cofactor. The cofactor is K(+).

It localises to the cytoplasm. It carries out the reaction (R)-pantothenate + ATP = (R)-4'-phosphopantothenate + ADP + H(+). It functions in the pathway cofactor biosynthesis; coenzyme A biosynthesis; CoA from (R)-pantothenate: step 1/5. Catalyzes the phosphorylation of pantothenate (Pan), the first step in CoA biosynthesis. This chain is Type III pantothenate kinase, found in Geobacillus kaustophilus (strain HTA426).